We begin with the raw amino-acid sequence, 1131 residues long: Tyrosine-protein kinase JAK2 (1131 aa).

Positions 1–239 (MGMACLTMTE…RYRFRRFIEQ (239 aa)) are interaction with cytokine/interferon/growth hormone receptors. The FERM domain maps to 37 to 380 (PVLQVYLYHS…GYYRLTADAH (344 aa)). Tyrosine 119 bears the Phosphotyrosine; by autocatalysis mark. A phosphotyrosine mark is found at tyrosine 372 and tyrosine 373. The SH2; atypical domain occupies 401-482 (HGPISMDFAI…NLKDLLNCYQ (82 aa)). Serine 523 bears the Phosphoserine mark. The 265-residue stretch at 545 to 809 (LIFNESLGQG…AIIRDLNSLF (265 aa)) folds into the Protein kinase 1 domain. Tyrosine 570 and tyrosine 813 each carry phosphotyrosine. The Protein kinase 2 domain maps to 849-1126 (LKFLQQLGKG…RDLALRVDQI (278 aa)). 855–863 (LGKGNFGSV) serves as a coordination point for ATP. Tyrosine 868 carries the post-translational modification Phosphotyrosine; by autocatalysis. Lysine 882 is a binding site for ATP. Phosphotyrosine; by autocatalysis is present on residues tyrosine 966 and tyrosine 972. The Proton acceptor role is filled by aspartate 976. Phosphotyrosine; by autocatalysis is present on residues tyrosine 1007 and tyrosine 1008.

Belongs to the protein kinase superfamily. Tyr protein kinase family. JAK subfamily. As to quaternary structure, interacts with IL23R, SKB1 and STAM2. Interacts with EPOR. Interacts with LYN. Interacts with SIRPA. Interacts with SH2B1. Interacts with TEC. Interacts with IFNGR2 (via intracellular domain). Interacts with LEPR (Isoform B). Interacts with HSP90AB1; promotes functional activation in a heat shock-dependent manner. Interacts with STRA6. Interacts with ASB2; the interaction targets JAK2 for Notch-induced proteasomal degradation. Mg(2+) serves as cofactor. Autophosphorylated, leading to regulate its activity. Leptin promotes phosphorylation on tyrosine residues, including phosphorylation on Tyr-813. Autophosphorylation on Tyr-119 in response to EPO down-regulates its kinase activity. Autophosphorylation on Tyr-868, Tyr-966 and Tyr-972 in response to growth hormone (GH) are required for maximal kinase activity. Also phosphorylated by TEC. Phosphorylated on tyrosine residues in response to interferon gamma signaling. Phosphorylated on tyrosine residues in response to a signaling cascade that is activated by increased cellular retinol. In terms of processing, undergoes Notch-induced ubiquitination and subsequent proteasomal degradation which is mediated by ASB1 or ASB2, the substrate-recognition components of probable ECS E3 ubiquitin-protein ligase complexes.

The protein resides in the endomembrane system. It is found in the cytoplasm. It localises to the nucleus. It catalyses the reaction L-tyrosyl-[protein] + ATP = O-phospho-L-tyrosyl-[protein] + ADP + H(+). With respect to regulation, regulated by autophosphorylation, can both activate or decrease activity. Heme regulates its activity by enhancing the phosphorylation on Tyr-1007 and Tyr-1008. Non-receptor tyrosine kinase involved in various processes such as cell growth, development, differentiation or histone modifications. Mediates essential signaling events in both innate and adaptive immunity. In the cytoplasm, plays a pivotal role in signal transduction via its association with type I receptors such as growth hormone (GHR), prolactin (PRLR), leptin (LEPR), erythropoietin (EPOR), thrombopoietin (THPO); or type II receptors including IFN-alpha, IFN-beta, IFN-gamma and multiple interleukins. Following ligand-binding to cell surface receptors, phosphorylates specific tyrosine residues on the cytoplasmic tails of the receptor, creating docking sites for STATs proteins. Subsequently, phosphorylates the STATs proteins once they are recruited to the receptor. Phosphorylated STATs then form homodimer or heterodimers and translocate to the nucleus to activate gene transcription. For example, cell stimulation with erythropoietin (EPO) during erythropoiesis leads to JAK2 autophosphorylation, activation, and its association with erythropoietin receptor (EPOR) that becomes phosphorylated in its cytoplasmic domain. Then, STAT5 (STAT5A or STAT5B) is recruited, phosphorylated and activated by JAK2. Once activated, dimerized STAT5 translocates into the nucleus and promotes the transcription of several essential genes involved in the modulation of erythropoiesis. Part of a signaling cascade that is activated by increased cellular retinol and that leads to the activation of STAT5 (STAT5A or STAT5B). In addition, JAK2 mediates angiotensin-2-induced ARHGEF1 phosphorylation. Plays a role in cell cycle by phosphorylating CDKN1B. Cooperates with TEC through reciprocal phosphorylation to mediate cytokine-driven activation of FOS transcription. In the nucleus, plays a key role in chromatin by specifically mediating phosphorylation of 'Tyr-41' of histone H3 (H3Y41ph), a specific tag that promotes exclusion of CBX5 (HP1 alpha) from chromatin. Up-regulates the potassium voltage-gated channel activity of KCNA3. The polypeptide is Tyrosine-protein kinase JAK2 (Sus scrofa (Pig)).